Consider the following 589-residue polypeptide: Poly(3-hydroxyalkanoate) polymerase subunit PhaC (589 aa).

The segment at 1-23 is disordered; sequence MATGKGAAASTQEGKSQPFKVTP. Residue Cys319 is part of the active site.

The protein belongs to the PHA/PHB synthase family. Type I PhaC subfamily. As to quaternary structure, monomer.

The protein resides in the cytoplasm. The catalysed reaction is (3R)-3-hydroxybutanoyl-CoA + [(3R)-hydroxybutanoate](n) = [(3R)-hydroxybutanoate](n+1) + CoA. It participates in biopolymer metabolism; poly-(R)-3-hydroxybutanoate biosynthesis. Polymerizes (R)-3-hydroxybutyryl-CoA to create polyhydroxybutyrate (PHB) which consists of thousands of hydroxybutyrate molecules linked end to end. PHB serves as an intracellular energy reserve material when cells grow under conditions of nutrient limitation. This Cupriavidus necator (strain ATCC 17699 / DSM 428 / KCTC 22496 / NCIMB 10442 / H16 / Stanier 337) (Ralstonia eutropha) protein is Poly(3-hydroxyalkanoate) polymerase subunit PhaC.